The following is a 510-amino-acid chain: Bifunctional pantoate ligase/cytidylate kinase (510 aa).

The segment at 1–276 is pantoate--beta-alanine ligase; it reads MNKIIIRKTE…CGKTRLIDHV (276 aa). An ATP-binding site is contributed by 29 to 36; the sequence is MGNLHDGH. The active-site Proton donor is the His-36. Gln-61 lines the (R)-pantoate pocket. Residue Gln-61 coordinates beta-alanine. An ATP-binding site is contributed by 150-153; that stretch reads GEKD. Gln-156 is a binding site for (R)-pantoate. 187–190 contacts ATP; sequence FSSR. A cytidylate kinase region spans residues 277–510; sequence FLMKRKPIIA…LNIPKEIQLE (234 aa).

It in the N-terminal section; belongs to the pantothenate synthetase family. This sequence in the C-terminal section; belongs to the cytidylate kinase family. Type 1 subfamily.

Its subcellular location is the cytoplasm. It carries out the reaction (R)-pantoate + beta-alanine + ATP = (R)-pantothenate + AMP + diphosphate + H(+). The catalysed reaction is CMP + ATP = CDP + ADP. It catalyses the reaction dCMP + ATP = dCDP + ADP. Its pathway is cofactor biosynthesis; (R)-pantothenate biosynthesis; (R)-pantothenate from (R)-pantoate and beta-alanine: step 1/1. Catalyzes the condensation of pantoate with beta-alanine in an ATP-dependent reaction via a pantoyl-adenylate intermediate. Its function is as follows. Catalyzes the transfer of a phosphate group from ATP to either CMP or dCMP to form CDP or dCDP and ADP, respectively. The protein is Bifunctional pantoate ligase/cytidylate kinase of Prochlorococcus marinus subsp. pastoris (strain CCMP1986 / NIES-2087 / MED4).